The following is a 358-amino-acid chain: 3-isopropylmalate dehydrogenase (358 aa).

Substrate-binding residues include R92, R102, R130, and D224. Residues D224, D248, and D252 each coordinate Mg(2+). 282 to 294 provides a ligand contact to NAD(+); it reads GSAPDIAGQGIAN.

This sequence belongs to the isocitrate and isopropylmalate dehydrogenases family. LeuB type 1 subfamily. In terms of assembly, homodimer. Mg(2+) is required as a cofactor. The cofactor is Mn(2+).

The protein localises to the cytoplasm. It carries out the reaction (2R,3S)-3-isopropylmalate + NAD(+) = 4-methyl-2-oxopentanoate + CO2 + NADH. It functions in the pathway amino-acid biosynthesis; L-leucine biosynthesis; L-leucine from 3-methyl-2-oxobutanoate: step 3/4. Its function is as follows. Catalyzes the oxidation of 3-carboxy-2-hydroxy-4-methylpentanoate (3-isopropylmalate) to 3-carboxy-4-methyl-2-oxopentanoate. The product decarboxylates to 4-methyl-2 oxopentanoate. The sequence is that of 3-isopropylmalate dehydrogenase from Bordetella pertussis (strain Tohama I / ATCC BAA-589 / NCTC 13251).